The following is a 308-amino-acid chain: 4-diphosphocytidyl-2-C-methyl-D-erythritol kinase (308 aa).

Lysine 24 is a catalytic residue. 118-128 lines the ATP pocket; the sequence is PVGAGMAGGSA. Residue aspartate 160 is part of the active site.

The protein belongs to the GHMP kinase family. IspE subfamily.

The catalysed reaction is 4-CDP-2-C-methyl-D-erythritol + ATP = 4-CDP-2-C-methyl-D-erythritol 2-phosphate + ADP + H(+). It functions in the pathway isoprenoid biosynthesis; isopentenyl diphosphate biosynthesis via DXP pathway; isopentenyl diphosphate from 1-deoxy-D-xylulose 5-phosphate: step 3/6. Its function is as follows. Catalyzes the phosphorylation of the position 2 hydroxy group of 4-diphosphocytidyl-2C-methyl-D-erythritol. This Bifidobacterium adolescentis (strain ATCC 15703 / DSM 20083 / NCTC 11814 / E194a) protein is 4-diphosphocytidyl-2-C-methyl-D-erythritol kinase.